The primary structure comprises 561 residues: Potassium-transporting ATPase potassium-binding subunit (561 aa).

11 helical membrane passes run 5-25, 60-80, 86-106, 131-151, 177-197, 247-267, 281-301, 376-396, 415-435, 489-509, and 531-551; these read LAAGLQIASVVAVLALVYVPL, CGYAGSVLGFSLAGVLVLYVL, VLPLSHGLAGVSPAVAFNTAV, GLAVQNFVSAAVGMAVAVALI, ILLPLAFVIALILLSQGVIQS, PTPLSNVVQILAILLIPVALT, LTVLAVMAGIYAVILGVTTAA, GLYGILVLAVIAVFVGGLLVG, ALAVLVMPALVLIGTAITVVL, LGLCMLFGRFLPILFVLALAG, and FAGLLTGTVVLVAALTFFPVL.

It belongs to the KdpA family. The system is composed of three essential subunits: KdpA, KdpB and KdpC.

Its subcellular location is the cell membrane. Part of the high-affinity ATP-driven potassium transport (or Kdp) system, which catalyzes the hydrolysis of ATP coupled with the electrogenic transport of potassium into the cytoplasm. This subunit binds the extracellular potassium ions and delivers the ions to the membrane domain of KdpB through an intramembrane tunnel. In Nocardia farcinica (strain IFM 10152), this protein is Potassium-transporting ATPase potassium-binding subunit.